A 418-amino-acid polypeptide reads, in one-letter code: UPF0754 membrane protein alr5253 (418 aa).

2 consecutive transmembrane segments (helical) span residues 10–30 (WSHLWLYVSPPILGGIIGYFT) and 394–414 (IVSLGGILGLIVGLFQTAFFI).

The protein belongs to the UPF0754 family.

The protein resides in the cell inner membrane. This is UPF0754 membrane protein alr5253 from Nostoc sp. (strain PCC 7120 / SAG 25.82 / UTEX 2576).